The primary structure comprises 336 residues: 3-isopropylmalate dehydrogenase (336 aa).

Residues Arg87, Arg97, Arg121, and Asp211 each coordinate substrate. Mg(2+) contacts are provided by Asp211, Asp235, and Asp239. 271–283 (GSAPDIAGQGIAD) is a binding site for NAD(+).

Belongs to the isocitrate and isopropylmalate dehydrogenases family. LeuB type 2 subfamily. In terms of assembly, homodimer. It depends on Mg(2+) as a cofactor. Mn(2+) serves as cofactor.

The protein localises to the cytoplasm. It catalyses the reaction (2R,3S)-3-isopropylmalate + NAD(+) = 4-methyl-2-oxopentanoate + CO2 + NADH. The protein operates within amino-acid biosynthesis; L-leucine biosynthesis; L-leucine from 3-methyl-2-oxobutanoate: step 3/4. Its function is as follows. Catalyzes the oxidation of 3-carboxy-2-hydroxy-4-methylpentanoate (3-isopropylmalate) to 3-carboxy-4-methyl-2-oxopentanoate. The product decarboxylates to 4-methyl-2 oxopentanoate. This chain is 3-isopropylmalate dehydrogenase, found in Mycolicibacterium vanbaalenii (strain DSM 7251 / JCM 13017 / BCRC 16820 / KCTC 9966 / NRRL B-24157 / PYR-1) (Mycobacterium vanbaalenii).